Consider the following 212-residue polypeptide: Interleukin-6 (212 aa).

The N-terminal stretch at 1–29 (MNSFSTSAFGPVAFSLGLLLVLPAAFPAP) is a signal peptide. A disulfide bond links Cys-72 and Cys-78. A glycan (N-linked (GlcNAc...) asparagine) is linked at Asn-73. Ser-81 is modified (phosphoserine; by FAM20C). Residues Cys-101 and Cys-111 are joined by a disulfide bond.

This sequence belongs to the IL-6 superfamily. As to quaternary structure, component of a hexamer of two molecules each of IL6, IL6R and IL6ST; first binds to IL6R to associate with the signaling subunit IL6ST. Interacts with IL6R (via the N-terminal ectodomain); this interaction may be affected by IL6R-binding with SORL1, hence decreasing IL6 cis signaling. Interacts with SORL1 (via the N-terminal ectodomain); this interaction leads to IL6 internalization and lysosomal degradation. May form a trimeric complex with the soluble SORL1 ectodomain and soluble IL6R receptor; this interaction might stabilize circulating IL6, hence promoting IL6 trans signaling. N- and O-glycosylated. As to expression, produced by skeletal muscle.

It localises to the secreted. Cytokine with a wide variety of biological functions in immunity, tissue regeneration, and metabolism. Binds to IL6R, then the complex associates to the signaling subunit IL6ST/gp130 to trigger the intracellular IL6-signaling pathway. The interaction with the membrane-bound IL6R and IL6ST stimulates 'classic signaling', whereas the binding of IL6 and soluble IL6R to IL6ST stimulates 'trans-signaling'. Alternatively, 'cluster signaling' occurs when membrane-bound IL6:IL6R complexes on transmitter cells activate IL6ST receptors on neighboring receiver cells. Its function is as follows. IL6 is a potent inducer of the acute phase response. Rapid production of IL6 contributes to host defense during infection and tissue injury, but excessive IL6 synthesis is involved in disease pathology. In the innate immune response, is synthesized by myeloid cells, such as macrophages and dendritic cells, upon recognition of pathogens through toll-like receptors (TLRs) at the site of infection or tissue injury. In the adaptive immune response, is required for the differentiation of B cells into immunoglobulin-secreting cells. Plays a major role in the differentiation of CD4(+) T cell subsets. Essential factor for the development of T follicular helper (Tfh) cells that are required for the induction of germinal-center formation. Required to drive naive CD4(+) T cells to the Th17 lineage. Also required for proliferation of myeloma cells and the survival of plasmablast cells. Functionally, acts as an essential factor in bone homeostasis and on vessels directly or indirectly by induction of VEGF, resulting in increased angiogenesis activity and vascular permeability. Induces, through 'trans-signaling' and synergistically with IL1B and TNF, the production of VEGF. Involved in metabolic controls, is discharged into the bloodstream after muscle contraction increasing lipolysis and improving insulin resistance. 'Trans-signaling' in central nervous system also regulates energy and glucose homeostasis. Mediates, through GLP-1, crosstalk between insulin-sensitive tissues, intestinal L cells and pancreatic islets to adapt to changes in insulin demand. Also acts as a myokine. Plays a protective role during liver injury, being required for maintenance of tissue regeneration. Also has a pivotal role in iron metabolism by regulating HAMP/hepcidin expression upon inflammation or bacterial infection. Through activation of IL6ST-YAP-NOTCH pathway, induces inflammation-induced epithelial regeneration. The polypeptide is Interleukin-6 (Homo sapiens (Human)).